Consider the following 574-residue polypeptide: MTAEALSSGELKAIRPYPARTGPKGNLVYKLITTTDHKMIGIMYCVACFIFFFVGGLLALLMRTELAAPGLQFLSNEQFNQLFTMHGTIMLLFYATPIVFGFANLVLPLQIGAPDVAFPRLNAFSFWLFLFGAAIGMAGFITPGGAADFGWTAYTPLTDAIHSPGVGGDLWIMGLIVAGLGTILGAVNMITTVVCLRAPGMTMFRMPIFTWNILVTSILVLIAFPLLTAALFGLAADRHLGAHIYDAANGGVLLWQHLFWFFGHPEVYIIALPFFGIVSEIFPVFSRKPIFGYTTLVYATLSIAALSVAVWAHHMFATGAVLLPFFSFMTYLIAVPTGIKFFNWVGTMWKGQLTFETPMLFSVGFAVTFLLGGLTGVLLASPPLDFHVTDSYFVVAHFHYVLFGTIVFSTFAGIYFWFPKMTGRLLDEQLGKLHFWLTFIGFHTTFLVQHWLGDMGMPRRYADYLPTDGFQGLNVVSTIGSFILGASMFPFVWNVFKSWRYGEVVTVDDPWGYGNSLEWATSCPPPRHNFTELPRIRSERPAFELHYPHMVERLRDEAYVGRRHAEELVEVSLH.

Residues Ile-40–Leu-60 form a helical membrane-spanning segment. A Fe(II)-heme a-binding site is contributed by His-86. The next 6 membrane-spanning stretches (helical) occupy residues Ile-89 to Leu-109, Leu-121 to Ile-141, Leu-170 to Ile-190, Ile-213 to Gly-233, Leu-258 to Val-278, and Ile-290 to Val-310. Cu cation-binding residues include His-264 and Tyr-268. A cross-link (1'-histidyl-3'-tyrosine (His-Tyr)) is located at residues His-264–Tyr-268. Cu cation-binding residues include His-313 and His-314. 2 helical membrane-spanning segments follow: residues Met-315 to Val-335 and Met-359 to Leu-379. His-397 serves as a coordination point for heme a3. 3 helical membrane-spanning segments follow: residues Phe-398–Phe-418, Leu-433–Gly-453, and Val-476–Phe-496. His-399 contacts Fe(II)-heme a.

Belongs to the heme-copper respiratory oxidase family. In terms of assembly, associates with subunits II, III and IV to form cytochrome c oxidase. It depends on Cu(2+) as a cofactor. Heme serves as cofactor.

It is found in the cell membrane. The enzyme catalyses 4 Fe(II)-[cytochrome c] + O2 + 8 H(+)(in) = 4 Fe(III)-[cytochrome c] + 2 H2O + 4 H(+)(out). The protein operates within energy metabolism; oxidative phosphorylation. Its function is as follows. Cytochrome c oxidase is the component of the respiratory chain that catalyzes the reduction of oxygen to water. Subunits 1-3 form the functional core of the enzyme complex. CO I is the catalytic subunit of the enzyme. Electrons originating in cytochrome c are transferred via the copper A center of subunit 2 and heme A of subunit 1 to the bimetallic center formed by heme A3 and copper B. This chain is Probable cytochrome c oxidase subunit 1 (ctaD), found in Mycobacterium leprae (strain TN).